The sequence spans 228 residues: ATP synthase subunit a 2 (228 aa).

The next 6 membrane-spanning stretches (helical) occupy residues 16 to 36 (VGTT…GAWL), 74 to 94 (VFPF…SSLI), 103 to 123 (DLSA…WFGI), 139 to 159 (SPFL…ALAV), 173 to 193 (LLVL…LHIV), and 194 to 214 (EALV…AGAI).

This sequence belongs to the ATPase A chain family. As to quaternary structure, F-type ATPases have 2 components, CF(1) - the catalytic core - and CF(0) - the membrane proton channel. CF(1) has five subunits: alpha(3), beta(3), gamma(1), delta(1), epsilon(1). CF(0) has three main subunits: a(1), b(2) and c(9-12). The alpha and beta chains form an alternating ring which encloses part of the gamma chain. CF(1) is attached to CF(0) by a central stalk formed by the gamma and epsilon chains, while a peripheral stalk is formed by the delta and b chains.

Its subcellular location is the cell inner membrane. In terms of biological role, key component of the proton channel; it plays a direct role in the translocation of protons across the membrane. This chain is ATP synthase subunit a 2, found in Pelobacter propionicus (strain DSM 2379 / NBRC 103807 / OttBd1).